The sequence spans 221 residues: Thiamine-phosphate synthase (221 aa).

Residues 39-43 (QLRCK) and Asn-76 each bind 4-amino-2-methyl-5-(diphosphooxymethyl)pyrimidine. Positions 77 and 96 each coordinate Mg(2+). 4-amino-2-methyl-5-(diphosphooxymethyl)pyrimidine is bound at residue Ser-114. A 2-[(2R,5Z)-2-carboxy-4-methylthiazol-5(2H)-ylidene]ethyl phosphate-binding site is contributed by 140 to 142 (TPT). Residue Lys-143 participates in 4-amino-2-methyl-5-(diphosphooxymethyl)pyrimidine binding. A 2-[(2R,5Z)-2-carboxy-4-methylthiazol-5(2H)-ylidene]ethyl phosphate-binding site is contributed by Gly-171.

This sequence belongs to the thiamine-phosphate synthase family. It depends on Mg(2+) as a cofactor.

The enzyme catalyses 2-[(2R,5Z)-2-carboxy-4-methylthiazol-5(2H)-ylidene]ethyl phosphate + 4-amino-2-methyl-5-(diphosphooxymethyl)pyrimidine + 2 H(+) = thiamine phosphate + CO2 + diphosphate. The catalysed reaction is 2-(2-carboxy-4-methylthiazol-5-yl)ethyl phosphate + 4-amino-2-methyl-5-(diphosphooxymethyl)pyrimidine + 2 H(+) = thiamine phosphate + CO2 + diphosphate. It catalyses the reaction 4-methyl-5-(2-phosphooxyethyl)-thiazole + 4-amino-2-methyl-5-(diphosphooxymethyl)pyrimidine + H(+) = thiamine phosphate + diphosphate. The protein operates within cofactor biosynthesis; thiamine diphosphate biosynthesis; thiamine phosphate from 4-amino-2-methyl-5-diphosphomethylpyrimidine and 4-methyl-5-(2-phosphoethyl)-thiazole: step 1/1. Functionally, condenses 4-methyl-5-(beta-hydroxyethyl)thiazole monophosphate (THZ-P) and 2-methyl-4-amino-5-hydroxymethyl pyrimidine pyrophosphate (HMP-PP) to form thiamine monophosphate (TMP). The protein is Thiamine-phosphate synthase of Deinococcus geothermalis (strain DSM 11300 / CIP 105573 / AG-3a).